Consider the following 482-residue polypeptide: Coagulation factor X (482 aa).

The first 20 residues, 1–20, serve as a signal peptide directing secretion; it reads MESPVRLSLLYVVLASLLLP. Residues 21–40 constitute a propeptide that is removed on maturation; sequence GRSVFINRERANNVLQRIRR. Residues 41-85 enclose the Gla domain; it reads ANSFFEEIKKGNLERECVEEICSFEEAREVFEDNEKTTEFWNKYE. A 4-carboxyglutamate mark is found at E46, E47, E54, E56, E59, E60, E65, E66, E69, E72, E75, and E79. A disulfide bond links C57 and C62. The region spanning 86–122 is the EGF-like 1; calcium-binding domain; it reads DGDQCESSPCQNQGECRDGLGSYTCTCTEGFEGKNCE. 11 cysteine pairs are disulfide-bonded: C90/C101, C95/C110, C112/C121, C129/C140, C136/C149, C151/C164, C172/C340, C238/C243, C259/C275, C388/C402, and C413/C441. D103 carries the post-translational modification (3R)-3-hydroxyaspartate. Residues 125-165 enclose the EGF-like 2 domain; that stretch reads VRKLCSLDNGDCDQFCREEQNSVVCSCAKGYFLGNDGKSCL. The propeptide at 184-231 is activation peptide; the sequence is VALNTSNSEPDPEDLMPDADILYPTESPSELLNLNKTEPEANSDDVIR. N-linked (GlcNAc...) asparagine glycans are attached at residues N187 and N218. Residues 232 to 465 form the Peptidase S1 domain; the sequence is IVGGQECKRG…FLKWIDRSMK (234 aa). Catalysis depends on charge relay system residues H274 and D320. S417 functions as the Charge relay system in the catalytic mechanism.

The protein belongs to the peptidase S1 family. As to quaternary structure, the two chains are formed from a single-chain precursor by the excision of two Arg residues and are held together by 1 or more disulfide bonds. Forms a heterodimer with SERPINA5. Interacts with ixolaris, an anticoagulant protein from Ixodes scapularis saliva. In terms of processing, the vitamin K-dependent, enzymatic carboxylation of some glutamate residues allows the modified protein to bind calcium. N- and O-glycosylated. Post-translationally, proteolytically cleaved and activated by cathepsin CTSG. The activation peptide is cleaved by factor IXa (in the intrinsic pathway), or by factor VIIa (in the extrinsic pathway). In terms of processing, the iron and 2-oxoglutarate dependent 3-hydroxylation of aspartate and asparagine is (R) stereospecific within EGF domains. In terms of tissue distribution, plasma; synthesized in the liver.

Its subcellular location is the secreted. It carries out the reaction Selective cleavage of Arg-|-Thr and then Arg-|-Ile bonds in prothrombin to form thrombin.. Inhibited by SERPINA5. Factor Xa is a vitamin K-dependent glycoprotein that converts prothrombin to thrombin in the presence of factor Va, calcium and phospholipid during blood clotting. Factor Xa activates pro-inflammatory signaling pathways in a protease-activated receptor (PAR)-dependent manner. The protein is Coagulation factor X (F10) of Rattus norvegicus (Rat).